Reading from the N-terminus, the 201-residue chain is Probable molybdenum cofactor guanylyltransferase (201 aa).

GTP contacts are provided by residues 6–8, Lys18, Asp65, and Asp97; that span reads LAG. Asp97 contributes to the Mg(2+) binding site.

It belongs to the MobA family. Requires Mg(2+) as cofactor.

It localises to the cytoplasm. The catalysed reaction is Mo-molybdopterin + GTP + H(+) = Mo-molybdopterin guanine dinucleotide + diphosphate. In terms of biological role, transfers a GMP moiety from GTP to Mo-molybdopterin (Mo-MPT) cofactor (Moco or molybdenum cofactor) to form Mo-molybdopterin guanine dinucleotide (Mo-MGD) cofactor. The sequence is that of Probable molybdenum cofactor guanylyltransferase from Staphylococcus epidermidis (strain ATCC 35984 / DSM 28319 / BCRC 17069 / CCUG 31568 / BM 3577 / RP62A).